The following is a 318-amino-acid chain: Pantothenate kinase (318 aa).

96–103 (GSVAVGKS) serves as a coordination point for ATP.

Belongs to the prokaryotic pantothenate kinase family.

It localises to the cytoplasm. It catalyses the reaction (R)-pantothenate + ATP = (R)-4'-phosphopantothenate + ADP + H(+). It functions in the pathway cofactor biosynthesis; coenzyme A biosynthesis; CoA from (R)-pantothenate: step 1/5. The chain is Pantothenate kinase from Rhodopseudomonas palustris (strain BisA53).